The sequence spans 406 residues: 2,3-bisphosphoglycerate-independent phosphoglycerate mutase (406 aa).

Belongs to the BPG-independent phosphoglycerate mutase family. A-PGAM subfamily.

The catalysed reaction is (2R)-2-phosphoglycerate = (2R)-3-phosphoglycerate. It functions in the pathway carbohydrate degradation; glycolysis; pyruvate from D-glyceraldehyde 3-phosphate: step 3/5. Functionally, catalyzes the interconversion of 2-phosphoglycerate and 3-phosphoglycerate. This chain is 2,3-bisphosphoglycerate-independent phosphoglycerate mutase, found in Methanococcus maripaludis (strain DSM 14266 / JCM 13030 / NBRC 101832 / S2 / LL).